Reading from the N-terminus, the 214-residue chain is Glutathione S-transferase F11 (214 aa).

The GST N-terminal domain occupies 2–82 (VVKVYGQIKA…YYATKYADQG (81 aa)). Glutathione is bound by residues 11–12 (AA), 40–41 (QK), 53–54 (QV), and 66–67 (ES). One can recognise a GST C-terminal domain in the interval 89-214 (TLEGRAIVDQ…WKKLMELAAY (126 aa)).

Belongs to the GST superfamily. Phi family.

The protein localises to the cytoplasm. It is found in the cytosol. The catalysed reaction is RX + glutathione = an S-substituted glutathione + a halide anion + H(+). Its function is as follows. May be involved in the conjugation of reduced glutathione to a wide number of exogenous and endogenous hydrophobic electrophiles and have a detoxification role against certain herbicides. The chain is Glutathione S-transferase F11 from Arabidopsis thaliana (Mouse-ear cress).